The chain runs to 274 residues: Proteasome subunit beta type-7-B (274 aa).

Positions 1 to 37 (MSQSSVDIPPKGGFSFDLCKRNDMLTQKGLKAPSFLK) are cleaved as a propeptide — removed in mature form. Thr40 functions as the Nucleophile in the catalytic mechanism.

The protein belongs to the peptidase T1B family. Component of the 20S core complex of the 26S proteasome. The 26S proteasome is composed of a core protease (CP), known as the 20S proteasome, capped at one or both ends by the 19S regulatory particle (RP/PA700). The 20S proteasome core is composed of 28 subunits that are arranged in four stacked rings, resulting in a barrel-shaped structure. The two end rings are each formed by seven alpha subunits, and the two central rings are each formed by seven beta subunits. The catalytic chamber with the active sites is on the inside of the barrel.

It localises to the cytoplasm. It is found in the nucleus. It carries out the reaction Cleavage of peptide bonds with very broad specificity.. In terms of biological role, the proteasome is a multicatalytic proteinase complex which is characterized by its ability to cleave peptides with Arg, Phe, Tyr, Leu, and Glu adjacent to the leaving group at neutral or slightly basic pH. The proteasome has an ATP-dependent proteolytic activity. The sequence is that of Proteasome subunit beta type-7-B (PBB2) from Arabidopsis thaliana (Mouse-ear cress).